We begin with the raw amino-acid sequence, 201 residues long: Small ribosomal subunit protein uS4c (201 aa).

An S4 RNA-binding domain is found at 89-152 (MRLDNILFRL…NSRTLVQNLL (64 aa)).

This sequence belongs to the universal ribosomal protein uS4 family. As to quaternary structure, part of the 30S ribosomal subunit. Contacts protein S5. The interaction surface between S4 and S5 is involved in control of translational fidelity.

Its subcellular location is the plastid. The protein resides in the chloroplast. Functionally, one of the primary rRNA binding proteins, it binds directly to 16S rRNA where it nucleates assembly of the body of the 30S subunit. With S5 and S12 plays an important role in translational accuracy. This chain is Small ribosomal subunit protein uS4c (rps4), found in Capsella bursa-pastoris (Shepherd's purse).